The sequence spans 123 residues: Small ribosomal subunit protein uS12cz/uS12cy/uS12cx/uS12w (123 aa).

Over residues 1 to 13 the composition is skewed to polar residues; it reads MPTSNQLLRNSRQ. The interval 1-30 is disordered; that stretch reads MPTSNQLLRNSRQPVRKTKKTPALRGCPQR. Residues 14–30 show a composition bias toward basic residues; sequence PVRKTKKTPALRGCPQR.

It belongs to the universal ribosomal protein uS12 family. In terms of assembly, part of the 30S ribosomal subunit.

The protein localises to the plastid. It localises to the chloroplast. With S4 and S5 plays an important role in translational accuracy. Located at the interface of the 30S and 50S subunits. The protein is Small ribosomal subunit protein uS12cz/uS12cy/uS12cx/uS12w (rps12-A) of Pelargonium hortorum (Common geranium).